The primary structure comprises 334 residues: GTPase Obg (334 aa).

The Obg domain occupies 1-159; the sequence is MRFVDEVVIK…KEVRLELNLL (159 aa). Residues 160–331 form the OBG-type G domain; sequence ADVALLGLPN…LAKKLNEFLQ (172 aa). Residues 166–173, 191–195, 212–215, 282–285, and 312–314 contribute to the GTP site; these read GLPNAGKS, FTTMY, DIPG, NKID, and SAA. Mg(2+) contacts are provided by serine 173 and threonine 193.

The protein belongs to the TRAFAC class OBG-HflX-like GTPase superfamily. OBG GTPase family. As to quaternary structure, monomer. Requires Mg(2+) as cofactor.

The protein resides in the cytoplasm. An essential GTPase which binds GTP, GDP and possibly (p)ppGpp with moderate affinity, with high nucleotide exchange rates and a fairly low GTP hydrolysis rate. Plays a role in control of the cell cycle, stress response, ribosome biogenesis and in those bacteria that undergo differentiation, in morphogenesis control. The chain is GTPase Obg from Francisella tularensis subsp. tularensis (strain WY96-3418).